Here is a 940-residue protein sequence, read N- to C-terminus: MDKIEVRGARTHNLKNINLTIPRDKLIVITGLSGSGKSSLAFDTLYAEGQRRYVESLSAYARQFLSLMEKPDVDHIEGLSPAISIEQKSTSHNPRSTVGTITEVYDYLRLLYARVGEPRCPEHQVPLAAQTISQMVDKVLELPEGAKMMLLAPIVKERKGEHVKTLENLAAQGFIRARIDGETCDLTDPPTLELHKKHTIEVVVDRVKVRGDLQQRLAESFETALELSGGIAVIAPMEGDGEEIVFSANFACPHCGYSMQELEPRLFSFNNPAGACGTCDGLGVQQYFDPERVIQDANLSLAQGAIRGWDQKNYYYFQMLTSLAEHYDFDLHAPFNSLSKRIQEVILKGSGRTEIEFKYINDRGDIRLKRHPFEGILNTLERRYRDTESNSVREELVKYISTKPCTSCGGTRLRLEARNVFINDTTLPQIVELSIADALTFFATLKLEGQRAQIAEKVMKEINDRLQFLVNVGLNYLNLSRSAETLSGGEAQRIRLASQIGAGLVGVMYVLDEPSIGLHQRDNERLLKTLTHLRDLGNTVLVVEHDEDAIRCADHVIDIGPGAGVHGGQVVAEGTMAEILANPDSLTGQYLSGAKQIIVPTQRTPRDKNKTVELIGASGNNLKEVNLSVPVGLFSCITGVSGSGKSTLINDTFFKIAHTQLNGATTAQPAPYKSIKGLEHFDKVIDIDQSPIGRTPRSNPATYTGIFTPIRELFSGTQESRSRGYKPGRFSFNVRGGRCEACQGDGVIKVEMHFLPDVYVPCDVCKGKRYNRETLEVHYKGKSIDEVLEMTVEDAHEFFAPVPVIARKLQTLMDVGLSYIRLGQAATTLSGGEAQRVKLARELSKRDTGKTLYILDEPTTGLHFHDIQQLLTVLHRLRDHGNTVVVIEHNLDVIKTADWIIDLGPEGGQGGGEIIAQGTPEDVAQIEGSHTARFLKPMLK.

31–38 (GLSGSGKS) lines the ATP pocket. A C4-type zinc finger spans residues 252-279 (CPHCGYSMQELEPRLFSFNNPAGACGTC). 2 ABC transporter domains span residues 309–586 (WDQK…PDSL) and 606–936 (RDKN…RFLK). Residue 639-646 (GVSGSGKS) coordinates ATP. Residues 739–765 (CEACQGDGVIKVEMHFLPDVYVPCDVC) form a C4-type zinc finger.

The protein belongs to the ABC transporter superfamily. UvrA family. As to quaternary structure, forms a heterotetramer with UvrB during the search for lesions.

It localises to the cytoplasm. Functionally, the UvrABC repair system catalyzes the recognition and processing of DNA lesions. UvrA is an ATPase and a DNA-binding protein. A damage recognition complex composed of 2 UvrA and 2 UvrB subunits scans DNA for abnormalities. When the presence of a lesion has been verified by UvrB, the UvrA molecules dissociate. The polypeptide is UvrABC system protein A (Vibrio vulnificus (strain CMCP6)).